The sequence spans 112 residues: T cell receptor alpha variable 13-1 (112 aa).

A signal peptide spans 1–20 (MTSIRAVFIFLWLQLDLVNG). Residues 21 to 112 (ENVEQHPSTL…DSAVYFCAAS (92 aa)) enclose the Ig-like domain. Cys-42 and Cys-109 are joined by a disulfide. N-linked (GlcNAc...) asparagine glycosylation is present at Asn-86.

As to quaternary structure, alpha-beta TR is a heterodimer composed of an alpha and beta chain; disulfide-linked. The alpha-beta TR is associated with the transmembrane signaling CD3 coreceptor proteins to form the TR-CD3 (TcR or TCR). The assembly of alpha-beta TR heterodimers with CD3 occurs in the endoplasmic reticulum where a single alpha-beta TR heterodimer associates with one CD3D-CD3E heterodimer, one CD3G-CD3E heterodimer and one CD247 homodimer forming a stable octameric structure. CD3D-CD3E and CD3G-CD3E heterodimers preferentially associate with TR alpha and TR beta chains, respectively. The association of the CD247 homodimer is the last step of TcR assembly in the endoplasmic reticulum and is required for transport to the cell surface.

It localises to the cell membrane. In terms of biological role, v region of the variable domain of T cell receptor (TR) alpha chain that participates in the antigen recognition. Alpha-beta T cell receptors are antigen specific receptors which are essential to the immune response and are present on the cell surface of T lymphocytes. Recognize peptide-major histocompatibility (MH) (pMH) complexes that are displayed by antigen presenting cells (APC), a prerequisite for efficient T cell adaptive immunity against pathogens. Binding of alpha-beta TR to pMH complex initiates TR-CD3 clustering on the cell surface and intracellular activation of LCK that phosphorylates the ITAM motifs of CD3G, CD3D, CD3E and CD247 enabling the recruitment of ZAP70. In turn ZAP70 phosphorylates LAT, which recruits numerous signaling molecules to form the LAT signalosome. The LAT signalosome propagates signal branching to three major signaling pathways, the calcium, the mitogen-activated protein kinase (MAPK) kinase and the nuclear factor NF-kappa-B (NF-kB) pathways, leading to the mobilization of transcription factors that are critical for gene expression and essential for T cell growth and differentiation. The T cell repertoire is generated in the thymus, by V-(D)-J rearrangement. This repertoire is then shaped by intrathymic selection events to generate a peripheral T cell pool of self-MH restricted, non-autoaggressive T cells. Post-thymic interaction of alpha-beta TR with the pMH complexes shapes TR structural and functional avidity. The polypeptide is T cell receptor alpha variable 13-1 (Homo sapiens (Human)).